The primary structure comprises 461 residues: Nucleobindin-1 (461 aa).

Residues 1–26 (MPPSGPRGTLLLLPLLLLLLLRAVLA) form the signal peptide. The tract at residues 42-51 (TESPDTGLYY) is O-glycosylated at one site. S86 is subject to Phosphoserine; by FAM20C. T148 is modified (phosphothreonine; by FAM20C). Residues 150 to 218 (EARDLELLIQ…QQRRHREHPK (69 aa)) are a coiled coil. A DNA-binding region spans residues 172–218 (HHEEFKRYEMLKEHERRRYLESLGEEQRKEAERKLEEQQRRHREHPK). Residues 193–210 (SLGEEQRKEAERKLEEQQ) are compositionally biased toward basic and acidic residues. Residues 193 to 221 (SLGEEQRKEAERKLEEQQRRHREHPKVNV) are disordered. Residues 228–321 (LKEVWEELDG…VTLEEFLAST (94 aa)) form a binds to GNAI2 and GNAI3 region. EF-hand domains follow at residues 240–275 (PNRFNPKTFFILHDINSDGVLDEQELEALFTKELEK) and 292–327 (ERLRMREHVMKNVDTNQDRLVTLEEFLASTQRKEFG). The Ca(2+) site is built by D253, N255, D257, E264, D305, N307, D309, and E316. A GBA motif is present at residues 303-333 (NVDTNQDRLVTLEEFLASTQRKEFGDTGEGW). Residues 341-407 (AYTEEELRRF…QRKQQQQQQQ (67 aa)) adopt a coiled-coil conformation. The tract at residues 368–461 (LSQETEALGR…LPEVEVPQHL (94 aa)) is disordered. At S369 the chain carries Phosphoserine; by FAM20C. Positions 437 to 461 (DQKEVDTSEKKLLERLPEVEVPQHL) are enriched in basic and acidic residues.

The protein belongs to the nucleobindin family. In terms of assembly, interacts (via GBA motif) with guanine nucleotide-binding protein G(i) alpha subunits GNAI1, GNAI2 and GNAI3 with higher affinity for GNAI1 and GNAI3 than for GNAI2. Preferentially interacts with inactive rather than active GNAI3. Interaction with GNAI3 is inhibited when NUCB1 binds calcium, probably due to a conformational change which renders the GBA motif inaccessible. In terms of processing, O-glycosylated. In terms of tissue distribution, expressed both in fetal and adult heart, lung, liver, kidney and brain, and in adult skeletal muscle, placenta and pancreas.

The protein resides in the golgi apparatus. Its subcellular location is the cis-Golgi network membrane. It localises to the cytoplasm. It is found in the secreted. Functionally, major calcium-binding protein of the Golgi which may have a role in calcium homeostasis. Acts as a non-receptor guanine nucleotide exchange factor which binds to and activates alpha subunits of guanine nucleotide-binding proteins (G proteins). The sequence is that of Nucleobindin-1 (NUCB1) from Homo sapiens (Human).